A 444-amino-acid chain; its full sequence is Ribulose bisphosphate carboxylase large chain (444 aa).

The residue at position 7 (Lys-7) is an N6,N6,N6-trimethyllysine. Substrate-binding residues include Asn-116 and Thr-166. Residue Lys-168 is the Proton acceptor of the active site. Lys-170 contributes to the substrate binding site. Mg(2+)-binding residues include Lys-194, Asp-196, and Glu-197. Residue Lys-194 is modified to N6-carboxylysine. The active-site Proton acceptor is His-287. Positions 288, 320, and 372 each coordinate substrate.

It belongs to the RuBisCO large chain family. Type I subfamily. As to quaternary structure, heterohexadecamer of 8 large chains and 8 small chains; disulfide-linked. The disulfide link is formed within the large subunit homodimers. Mg(2+) is required as a cofactor. Post-translationally, the disulfide bond which can form in the large chain dimeric partners within the hexadecamer appears to be associated with oxidative stress and protein turnover.

Its subcellular location is the plastid. It is found in the chloroplast. The catalysed reaction is 2 (2R)-3-phosphoglycerate + 2 H(+) = D-ribulose 1,5-bisphosphate + CO2 + H2O. The enzyme catalyses D-ribulose 1,5-bisphosphate + O2 = 2-phosphoglycolate + (2R)-3-phosphoglycerate + 2 H(+). RuBisCO catalyzes two reactions: the carboxylation of D-ribulose 1,5-bisphosphate, the primary event in carbon dioxide fixation, as well as the oxidative fragmentation of the pentose substrate in the photorespiration process. Both reactions occur simultaneously and in competition at the same active site. The chain is Ribulose bisphosphate carboxylase large chain from Watsonia angusta.